A 122-amino-acid chain; its full sequence is Large ribosomal subunit protein uL14 (122 aa).

It belongs to the universal ribosomal protein uL14 family. Part of the 50S ribosomal subunit. Forms a cluster with proteins L3 and L19. In the 70S ribosome, L14 and L19 interact and together make contacts with the 16S rRNA in bridges B5 and B8.

Binds to 23S rRNA. Forms part of two intersubunit bridges in the 70S ribosome. The protein is Large ribosomal subunit protein uL14 of Verminephrobacter eiseniae (strain EF01-2).